Here is a 470-residue protein sequence, read N- to C-terminus: Neuraminidase (470 aa).

Over 1–14 the chain is Intravirion; the sequence is MNPNQKIITIGSIS. The segment at 11–32 is involved in apical transport and lipid raft association; sequence GSISLGLVVFNVLLHVVSIIVT. The chain crosses the membrane as a helical span at residues 15–35; the sequence is LGLVVFNVLLHVVSIIVTVLI. The interval 32 to 86 is hypervariable stalk region; that stretch reads TVLILGKGENNGICNGTVVREYNETVRIERVTQWHNTNVVEYVPYWNGGTYMNNT. At 36 to 470 the chain is on the virion surface side; it reads LGKGENNGIC…AILPFDIDKM (435 aa). Residues N46, N54, and N84 are each glycosylated (N-linked (GlcNAc...) asparagine; by host). Residues 89-470 are head of neuraminidase; it reads ICDVKGFAPF…AILPFDIDKM (382 aa). Disulfide bonds link C90–C417, C122–C127, C182–C229, C231–C236, C277–C290, C279–C288, C316–C335, and C421–C446. Residue R116 coordinates substrate. Residue N144 is glycosylated (N-linked (GlcNAc...) asparagine; by host). The Proton donor/acceptor role is filled by D149. R150 is a binding site for substrate. 275-276 is a substrate binding site; sequence EE. R291 lines the substrate pocket. Residue D292 participates in Ca(2+) binding. A glycan (N-linked (GlcNAc...) asparagine; by host) is linked at N293. Residues G296 and D322 each coordinate Ca(2+). R368 lines the substrate pocket. A glycan (N-linked (GlcNAc...) asparagine; by host) is linked at N398. Y402 acts as the Nucleophile in catalysis.

The protein belongs to the glycosyl hydrolase 34 family. Homotetramer. Requires Ca(2+) as cofactor. Post-translationally, N-glycosylated.

It is found in the virion membrane. The protein localises to the host apical cell membrane. The catalysed reaction is Hydrolysis of alpha-(2-&gt;3)-, alpha-(2-&gt;6)-, alpha-(2-&gt;8)- glycosidic linkages of terminal sialic acid residues in oligosaccharides, glycoproteins, glycolipids, colominic acid and synthetic substrates.. Inhibited by the neuraminidase inhibitors zanamivir (Relenza) and oseltamivir (Tamiflu). These drugs interfere with the release of progeny virus from infected cells and are effective against all influenza strains. Resistance to neuraminidase inhibitors is quite rare. Catalyzes the removal of terminal sialic acid residues from viral and cellular glycoconjugates. Cleaves off the terminal sialic acids on the glycosylated HA during virus budding to facilitate virus release. Additionally helps virus spread through the circulation by further removing sialic acids from the cell surface. These cleavages prevent self-aggregation and ensure the efficient spread of the progeny virus from cell to cell. Otherwise, infection would be limited to one round of replication. Described as a receptor-destroying enzyme because it cleaves a terminal sialic acid from the cellular receptors. May facilitate viral invasion of the upper airways by cleaving the sialic acid moieties on the mucin of the airway epithelial cells. Likely to plays a role in the budding process through its association with lipid rafts during intracellular transport. May additionally display a raft-association independent effect on budding. Plays a role in the determination of host range restriction on replication and virulence. Sialidase activity in late endosome/lysosome traffic seems to enhance virus replication. The polypeptide is Neuraminidase (Influenza A virus (strain A/Turkey/Ireland/1378/1983 H5N8)).